We begin with the raw amino-acid sequence, 237 residues long: Bax inhibitor 1 (237 aa).

The Cytoplasmic segment spans residues 1-29 (MNIFDRKINFDALLKFSHITPSTQQHLKK). A Glycyl lysine isopeptide (Lys-Gly) (interchain with G-Cter in ubiquitin) cross-link involves residue lysine 7. A helical transmembrane segment spans residues 30 to 50 (VYASFALCMFVAAAGAYVHVV). The Lumenal segment spans residues 51-52 (TR). A helical membrane pass occupies residues 53-73 (FIQAGLLSALGSLGLMIWLMA). Over 74–86 (TPHSHETEQKRLG) the chain is Cytoplasmic. Residues 87–107 (LLAGFAFLTGVGLGPALDLCI) form a helical membrane-spanning segment. Over 108 to 112 (AINPS) the chain is Lumenal. The chain crosses the membrane as a helical span at residues 113–133 (ILPTAFMGTAMIFTCFTLSAL). Residues 134 to 139 (YARRRS) are Cytoplasmic-facing. Residues 140–160 (YLFLGGILMSAMSLMVLSSLG) traverse the membrane as a helical segment. Topologically, residues 161–166 (NLFFGS) are lumenal. The helical transmembrane segment at 167–187 (IWLFQANLYVGLVVMCGFVLF) threads the bilayer. Topologically, residues 188-206 (DTQLIIEKAENGDKDYIWH) are cytoplasmic. An intramembrane region (helical) is located at residues 207–227 (CVDLFSDFVTLFRKLMMILAM). The Cytoplasmic portion of the chain corresponds to 228–237 (NEKDKKKEKK).

This sequence belongs to the BI1 family. Interacts with BCL2 and BCL2L1. Interacts with ERN1. In terms of processing, ubiquitinated by BFAR, leading to proteasomal degradation.

It localises to the endoplasmic reticulum membrane. Functionally, endoplasmic reticulum (ER)-resident protein that confers cellular protection as an anti-apoptotic protein by limiting multiple stress-inducing pathways surrounding the endoplasmic reticulum and mitochondria. Inhibits the activities of the key sensor for the endoplasmic reticulum unfolded protein response IRE1alpha/ERN1 both directly and by blocking BAX/BAK binding. Modulates ER calcium homeostasis by acting as a calcium-leak channel. Negatively regulates autophagy and autophagosome formation, especially during periods of nutrient deprivation, and reduces cell survival during starvation. This Sus scrofa (Pig) protein is Bax inhibitor 1 (TMBIM6).